The sequence spans 425 residues: Glucose-6-phosphate 1-dehydrogenase (425 aa).

The NADP(+) site is built by R44 and K135. 4 residues coordinate substrate: H165, K169, E201, and D220. Residue H225 is the Proton acceptor of the active site. K311 contributes to the substrate binding site.

It belongs to the glucose-6-phosphate dehydrogenase family.

It carries out the reaction D-glucose 6-phosphate + NADP(+) = 6-phospho-D-glucono-1,5-lactone + NADPH + H(+). The protein operates within carbohydrate degradation; pentose phosphate pathway; D-ribulose 5-phosphate from D-glucose 6-phosphate (oxidative stage): step 1/3. Its function is as follows. Catalyzes the oxidation of glucose 6-phosphate to 6-phosphogluconolactone. The chain is Glucose-6-phosphate 1-dehydrogenase from Helicobacter pylori (strain J99 / ATCC 700824) (Campylobacter pylori J99).